The primary structure comprises 245 residues: Orotidine 5'-phosphate decarboxylase (245 aa).

Residues Asp22, Lys44, 71–80 (DLKFHDIPNT), Thr131, Arg192, Gln201, Gly221, and Arg222 each bind substrate. The active-site Proton donor is the Lys73.

Belongs to the OMP decarboxylase family. Type 1 subfamily. As to quaternary structure, homodimer.

It catalyses the reaction orotidine 5'-phosphate + H(+) = UMP + CO2. It participates in pyrimidine metabolism; UMP biosynthesis via de novo pathway; UMP from orotate: step 2/2. Functionally, catalyzes the decarboxylation of orotidine 5'-monophosphate (OMP) to uridine 5'-monophosphate (UMP). The sequence is that of Orotidine 5'-phosphate decarboxylase from Shigella flexneri.